Consider the following 151-residue polypeptide: Conidium-specific protein (151 aa).

A disordered region spans residues 1–72 (MAKPHCSSRS…FSGDPDSEVE (72 aa)). Over residues 48–60 (RKDNSADKGDTLR) the composition is skewed to basic and acidic residues.

This Emericella nidulans (strain FGSC A4 / ATCC 38163 / CBS 112.46 / NRRL 194 / M139) (Aspergillus nidulans) protein is Conidium-specific protein (SpoC1-C1D).